A 714-amino-acid polypeptide reads, in one-letter code: Structure-specific endonuclease subunit SLX4 1 (714 aa).

2 stretches are compositionally biased toward basic and acidic residues: residues 1 to 14 (MSPE…EDNL) and 24 to 34 (IHEETLAEESH). 2 disordered regions span residues 1-116 (MSPE…QGSI) and 337-369 (DSSG…KTPQ). Residues 36–46 (QSIQRSISRLS) show a composition bias toward low complexity. Positions 79–92 (KTKKRKLKVSKPRK) are enriched in basic residues.

This sequence belongs to the SLX4 family. As to quaternary structure, forms a heterodimer with SLX1. Post-translationally, phosphorylated in response to DNA damage.

The protein localises to the nucleus. Its function is as follows. Regulatory subunit of the SLX1-SLX4 structure-specific endonuclease that resolves DNA secondary structures generated during DNA repair and recombination. Has endonuclease activity towards branched DNA substrates, introducing single-strand cuts in duplex DNA close to junctions with ss-DNA. The protein is Structure-specific endonuclease subunit SLX4 1 of Candida tropicalis (strain ATCC MYA-3404 / T1) (Yeast).